Here is a 362-residue protein sequence, read N- to C-terminus: Probable endopolygalacturonase B (362 aa).

An N-terminal signal peptide occupies residues 1–20; it reads MHFLQNAVVAATMGAALAAA. Positions 21 to 25 are excised as a propeptide; sequence APLEK. A disulfide bridge connects residues Cys-28 and Cys-43. PbH1 repeat units follow at residues 155-184, 185-206, 207-227, 236-257, 265-287, and 299-344; these read ADHL…DIGQ, STYI…AINS, GEHI…SIGS, VNDV…RIKT, VENV…VVEQ, and TNGV…DVTG. The active-site Proton donor is the Asp-199. Residues Cys-201 and Cys-217 are joined by a disulfide bond. The active site involves His-221. Cys-327 and Cys-332 are oxidised to a cystine. N-linked (GlcNAc...) asparagine glycosylation occurs at Asn-334. An intrachain disulfide couples Cys-351 to Cys-360.

It belongs to the glycosyl hydrolase 28 family.

The protein resides in the secreted. The enzyme catalyses (1,4-alpha-D-galacturonosyl)n+m + H2O = (1,4-alpha-D-galacturonosyl)n + (1,4-alpha-D-galacturonosyl)m.. Involved in maceration and soft-rotting of plant tissue. Hydrolyzes the 1,4-alpha glycosidic bonds of de-esterified pectate in the smooth region of the plant cell wall. The sequence is that of Probable endopolygalacturonase B (pgaB) from Aspergillus niger (strain ATCC MYA-4892 / CBS 513.88 / FGSC A1513).